The primary structure comprises 578 residues: Membrane protein insertase YidC (578 aa).

The chain crosses the membrane as a helical span at residues 3 to 23 (IQRSILIVALAVVSYLLVLQW). Residues 34–72 (AASASMNTTQGLPDTPSASGTSSDVPTAQSSAAGSEAAD) are disordered. Polar residues predominate over residues 37–66 (ASMNTTQGLPDTPSASGTSSDVPTAQSSAA). 5 helical membrane-spanning segments follow: residues 361–381 (LELT…FWLL), 387–407 (LIGN…LAFF), 457–477 (LGGC…YWVL), 500–520 (PFFI…MLNP), and 535–555 (PIIF…YWVV).

The protein belongs to the OXA1/ALB3/YidC family. Type 1 subfamily. Interacts with the Sec translocase complex via SecD. Specifically interacts with transmembrane segments of nascent integral membrane proteins during membrane integration.

It localises to the cell inner membrane. In terms of biological role, required for the insertion and/or proper folding and/or complex formation of integral membrane proteins into the membrane. Involved in integration of membrane proteins that insert both dependently and independently of the Sec translocase complex, as well as at least some lipoproteins. Aids folding of multispanning membrane proteins. This is Membrane protein insertase YidC from Pseudomonas aeruginosa (strain LESB58).